The sequence spans 125 residues: uncharacterized protein (125 aa).

Residues 100-120 (YFKVAFALAVLTPLAIWIFYI) form a helical membrane-spanning segment.

It is found in the membrane. This is an uncharacterized protein from Saccharomyces cerevisiae (strain ATCC 204508 / S288c) (Baker's yeast).